The primary structure comprises 29 residues: Dermaseptin-1.2TR (29 aa).

V29 is modified (valine amide).

In terms of tissue distribution, expressed by the skin glands.

Its subcellular location is the secreted. In terms of biological role, has antimicrobial activity. The polypeptide is Dermaseptin-1.2TR (Phyllomedusa trinitatis (Trinidad leaf frog)).